The primary structure comprises 508 residues: Photosystem II CP47 reaction center protein (508 aa).

The next 6 membrane-spanning stretches (helical) occupy residues 21 to 36 (SVHLMHTALVSGWAGS), 101 to 115 (IVLSGLLFLASIWHW), 140 to 156 (GIHLFLSGLLCFGFGAF), 203 to 218 (IAAGILGILAGLFHLT), 237 to 252 (VLSSSIAAVFWAAFVV), and 457 to 472 (CFALLFFFGHIWHGAR).

It belongs to the PsbB/PsbC family. PsbB subfamily. PSII is composed of 1 copy each of membrane proteins PsbA, PsbB, PsbC, PsbD, PsbE, PsbF, PsbH, PsbI, PsbJ, PsbK, PsbL, PsbM, PsbT, PsbX, PsbY, PsbZ, Psb30/Ycf12, at least 3 peripheral proteins of the oxygen-evolving complex and a large number of cofactors. It forms dimeric complexes. Binds multiple chlorophylls. PSII binds additional chlorophylls, carotenoids and specific lipids. is required as a cofactor.

The protein localises to the plastid. Its subcellular location is the chloroplast thylakoid membrane. Functionally, one of the components of the core complex of photosystem II (PSII). It binds chlorophyll and helps catalyze the primary light-induced photochemical processes of PSII. PSII is a light-driven water:plastoquinone oxidoreductase, using light energy to abstract electrons from H(2)O, generating O(2) and a proton gradient subsequently used for ATP formation. This Chlorokybus atmophyticus (Soil alga) protein is Photosystem II CP47 reaction center protein.